The primary structure comprises 117 residues: Large ribosomal subunit protein uL18 (117 aa).

Belongs to the universal ribosomal protein uL18 family. Part of the 50S ribosomal subunit; part of the 5S rRNA/L5/L18/L25 subcomplex. Contacts the 5S and 23S rRNAs.

Functionally, this is one of the proteins that bind and probably mediate the attachment of the 5S RNA into the large ribosomal subunit, where it forms part of the central protuberance. The chain is Large ribosomal subunit protein uL18 from Francisella tularensis subsp. tularensis (strain FSC 198).